Here is a 569-residue protein sequence, read N- to C-terminus: Probable santalene synthase (569 aa).

(2E)-geranyl diphosphate is bound by residues Arg-284, Asp-321, Asp-325, Arg-460, and Asn-463. Mg(2+) is bound by residues Asp-321 and Asp-325. A DDXXD motif motif is present at residues 321 to 325 (DDAYD). 3 residues coordinate Mg(2+): Asn-463, Thr-467, and Glu-471.

This sequence belongs to the terpene synthase family. Tpsb subfamily. Mg(2+) serves as cofactor. Mn(2+) is required as a cofactor.

Its function is as follows. Catalyzes the formation of santalene. The chain is Probable santalene synthase (SSY) from Santalum murrayanum (Bitter quandong).